The primary structure comprises 405 residues: Imidazolonepropionase (405 aa).

Fe(3+) contacts are provided by H72 and H74. Residues H72 and H74 each coordinate Zn(2+). 4-imidazolone-5-propanoate-binding residues include R81, Y144, and H177. Y144 contacts N-formimidoyl-L-glutamate. H242 is a Fe(3+) binding site. H242 is a Zn(2+) binding site. Residue Q245 participates in 4-imidazolone-5-propanoate binding. D317 is a binding site for Fe(3+). D317 lines the Zn(2+) pocket. The N-formimidoyl-L-glutamate site is built by N319 and G321. T322 provides a ligand contact to 4-imidazolone-5-propanoate.

The protein belongs to the metallo-dependent hydrolases superfamily. HutI family. Requires Zn(2+) as cofactor. It depends on Fe(3+) as a cofactor.

The protein localises to the cytoplasm. It carries out the reaction 4-imidazolone-5-propanoate + H2O = N-formimidoyl-L-glutamate. It functions in the pathway amino-acid degradation; L-histidine degradation into L-glutamate; N-formimidoyl-L-glutamate from L-histidine: step 3/3. Functionally, catalyzes the hydrolytic cleavage of the carbon-nitrogen bond in imidazolone-5-propanoate to yield N-formimidoyl-L-glutamate. It is the third step in the universal histidine degradation pathway. The sequence is that of Imidazolonepropionase from Klebsiella pneumoniae (strain 342).